We begin with the raw amino-acid sequence, 686 residues long: MGGAWQEAVVRSIGAADERMVRLSGWASLALALGLVCVVVPVVNYMRLNPWVFRVMHHWRHHVMRRHGAMCRKLVQQRTLWLALLWCMLGGACAVVGSADVVVVTKRLGRVAAAFMPALFLLTLRPSPLPYTLYLSLLPMHKWLGRVVVLQATVHSALYTWYFATSGKMAKMKKTANWMGAVALLAFVLIAATSLPAVRRRRFRTFYYVHYVGTWVSVLAVHVHSRPPVTTYTVLNVALLLYQAWYRISRMSTTTVTVVPISTSLALLEFPLADLVEKPQLPSGHVRINLRAPSILGRVFQHIMPMQHPFTVASLPTDTTVRLIVRKSRFPLVNNGKYYVTGAFEPKVDFLSHRKRRMPGSWAPEPASPFQCQSPSLQSSPLHYNIKASRVLMVVGGSAISFGLPFLRILNFNGVNVRLIWVCRDYHDLRILSQFRSNFNGLEIYVTGTNCEEQDLNIDYVDYDERSSEGERDPERCALLSPKASEYNCLTPTTGGSTLSGRDAHNYSTFQNRCHSCKHLDRGCRDLEDHAIADINDEIDFTDFFSTRHSTSKYHPKENSKLPVITKDSVFRKPNYVVPPVFDRYDLKTGFTTYTTREKLSIPTGVKLFFGRPVLSPRDYHWCLQKECIGPSETNECCRADIANSTHVDDLARVWVLAAGPQALVEATRIWASDGGLHFHEESFKV.

7 helical membrane passes run 23–43, 79–99, 111–131, 147–167, 178–198, 205–225, and 256–276; these read LSGW…VPVV, TLWL…VGSA, VAAA…PLPY, VVVL…ATSG, WMGA…LPAV, TFYY…HVHS, and VTVV…ADLV. A Ferric oxidoreductase domain is found at 108–666; sequence LGRVAAAFMP…LAAGPQALVE (559 aa). 308 to 314 serves as a coordination point for FAD; the sequence is HPFTVAS. The helical transmembrane segment at 392 to 412 threads the bilayer; it reads LMVVGGSAISFGLPFLRILNF. 431-439 lines the NAD(+) pocket; the sequence is ILSQFRSNF. Residues N506 and N644 are each glycosylated (N-linked (GlcNAc...) asparagine).

FAD serves as cofactor.

The protein resides in the membrane. The catalysed reaction is 2 a Fe(II)-siderophore + NAD(+) + H(+) = 2 a Fe(III)-siderophore + NADH. In terms of biological role, is required for the uptake of Fe(3+) ions. May participate in the transport of electrons from cytoplasm to an extracellular substrate (Fe(3+) ion) via FAD and heme intermediates. Involved in iron homeostasis. This chain is Probable ferric reductase transmembrane component (FRE8), found in Eremothecium gossypii (strain ATCC 10895 / CBS 109.51 / FGSC 9923 / NRRL Y-1056) (Yeast).